The primary structure comprises 497 residues: L-amino-acid oxidase BjussuLAAO-I (497 aa).

An N-terminal signal peptide occupies residues 1 to 13; that stretch reads MNVFFMFSKPGKL. A disulfide bridge connects residues cysteine 23 and cysteine 186. FAD-binding positions include 56–57, 76–77, 76–80, glutamine 84, and 100–103; these read MS, EA, EASER, and GPMR. Position 103 (arginine 103) interacts with substrate. The N-linked (GlcNAc...) asparagine glycan is linked to asparagine 185. Residue histidine 236 coordinates substrate. Valine 274 serves as a coordination point for FAD. Cysteine 344 and cysteine 425 form a disulfide bridge. Tyrosine 385 lines the substrate pocket. FAD-binding positions include glutamate 470, 477-482, and 478-482; these read GWIAST and WIAST. Residue 477 to 478 coordinates substrate; the sequence is GW.

It belongs to the flavin monoamine oxidase family. FIG1 subfamily. As to quaternary structure, homodimer; non-covalently linked. Requires FAD as cofactor. As to expression, expressed by the venom gland.

The protein resides in the secreted. It catalyses the reaction an L-alpha-amino acid + O2 + H2O = a 2-oxocarboxylate + H2O2 + NH4(+). The enzyme catalyses L-leucine + O2 + H2O = 4-methyl-2-oxopentanoate + H2O2 + NH4(+). The catalysed reaction is L-phenylalanine + O2 + H2O = 3-phenylpyruvate + H2O2 + NH4(+). It carries out the reaction L-tryptophan + O2 + H2O = indole-3-pyruvate + H2O2 + NH4(+). It catalyses the reaction L-methionine + O2 + H2O = 4-methylsulfanyl-2-oxobutanoate + H2O2 + NH4(+). The enzyme catalyses L-isoleucine + O2 + H2O = (S)-3-methyl-2-oxopentanoate + H2O2 + NH4(+). The catalysed reaction is L-tyrosine + O2 + H2O = 3-(4-hydroxyphenyl)pyruvate + H2O2 + NH4(+). It carries out the reaction L-cysteine + O2 + H2O = 2-oxo-3-sulfanylpropanoate + H2O2 + NH4(+). Catalyzes an oxidative deamination of predominantly hydrophobic and aromatic L-amino acids, thus producing hydrogen peroxide that may contribute to the diverse toxic effects of this enzyme. Shows high specificity for L-Met, L-Leu, L-Phe, L-Tyr, L-Ile, L-Trp, a moderate activity on L-Cys and low activity on L-Val, L-Lys, L-Arg, L-His, L-Gln, L-Thr and L-Ser. Exhibits diverse biological activities, such as hemorrhage, hemolysis, edema, apoptosis of vascular endothelial cells or tumor cell lines, and antibacterial, as well as regulation of platelet aggregation. Effects of snake L-amino oxidases on platelets are controversial, since they either induce aggregation or inhibit agonist-induced aggregation. These different effects are probably due to different experimental conditions. In vitro, shows parasiticidal activities against both trypanosomes and leishmania, as a result of enzyme-catalyzed hydrogen peroxide production. The chain is L-amino-acid oxidase BjussuLAAO-I from Bothrops jararacussu (Jararacussu).